Here is a 474-residue protein sequence, read N- to C-terminus: Stabilizer of axonemal microtubules 1 (474 aa).

Mn stretches follow at residues 30-64 (KPCLLSEYTENYPFYHSYLPRESFKPRREYQKGPI), 65-97 (PMEGLTTSRRDFGPHKVAPVKVHQYDQFVPSEE), 98-131 (NMDLLTTYKKDYNPYPVCRVDPIKPRDSKYPCSD), 132-165 (KMECLPTYKADYLPWNQPRREPLRLEHKYQPASV), 166-199 (RFDNRTTHQDDYPIKGLVKTISCKPLAMPKLCNI), 200-232 (PLEDVTNYKMSYVAHPVEKRFVHEAEKFRPCEI), 233-266 (PFESLTTQKQSYRGLMGEPAKSLKPLARPPGLDM), 267-299 (PFCNTTEFRDKYQAWPMPRMFSKAPITYVPPED), 300-332 (RMDLLTTVQAHYTCPKGAPAQSCRPALQIKKCG), 333-366 (RFEGSSTTKDDYKQWSSMRTEPVKPVPQLDLPTE), 367-400 (PLDCLTTTRAHYVPHLPINTKSCKPHWSGPRGNV), and 401-434 (PVESQTTYTISFTPKEMGRCLASYPEPPGYTFEE). A disordered region spans residues 446–474 (VSQAGSQQSSHLSVDDSENPNQRELEVLA). Residues 448–457 (QAGSQQSSHL) show a composition bias toward polar residues.

This sequence belongs to the FAM154 family. As to quaternary structure, associates with microtubules via the Mn regions. As to expression, widely expressed, with highest levels in testis. Expressed in mature spermatozoa (at protein level).

It is found in the cytoplasm. It localises to the cytoskeleton. Its subcellular location is the microtubule organizing center. The protein resides in the centrosome. The protein localises to the centriole. It is found in the cilium basal body. It localises to the cilium axoneme. Its subcellular location is the flagellum axoneme. In terms of biological role, may play a role in the regulation of cilium length. Stabilizes microtubules at low temperature. The sequence is that of Stabilizer of axonemal microtubules 1 (SAXO1) from Homo sapiens (Human).